The chain runs to 336 residues: Phosphate acetyltransferase (336 aa).

This sequence belongs to the phosphate acetyltransferase and butyryltransferase family.

The protein localises to the cytoplasm. The catalysed reaction is acetyl-CoA + phosphate = acetyl phosphate + CoA. Its pathway is metabolic intermediate biosynthesis; acetyl-CoA biosynthesis; acetyl-CoA from acetate: step 2/2. The chain is Phosphate acetyltransferase (pta) from Treponema pallidum (strain Nichols).